A 1496-amino-acid chain; its full sequence is Synaptojanin-2 (1496 aa).

Positions 120–444 (LKKILSSGVF…GHSLSKVFTG (325 aa)) constitute an SAC domain. The 80-residue stretch at 889–968 (DATVVVNLQS…RAVKIRPKTK (80 aa)) folds into the RRM domain. Disordered regions lie at residues 1027–1073 (NQPG…DDAD), 1085–1166 (GEFR…YNVK), 1190–1405 (ASEE…PEAA), and 1427–1473 (NTWL…KTLG). Over residues 1101–1115 (RPRPPQPPQRPPPPT) the composition is skewed to pro residues. Phosphoserine is present on residues Ser-1124 and Ser-1191. Positions 1124 to 1140 (SDASISSGTHGQYSILQ) are enriched in polar residues. Pro residues-rich tracts occupy residues 1221–1235 (PQAPPLLPRRPPPRV) and 1319–1332 (VPPPLEAPPLVPKV). Residues 1340 to 1359 (APAAFHLQVLQSNSQLLQGL) show a composition bias toward low complexity. Polar residues-rich tracts occupy residues 1383–1394 (FLSTSSATSPDS) and 1427–1442 (NTWLSKSSDPLDSGTR).

The protein belongs to the synaptojanin family. In the central section; belongs to the inositol 1,4,5-trisphosphate 5-phosphatase family. In terms of assembly, binds to GRB2. Isoform 2A binds to SYNJ2BP/OMP25. Isoform 2B2 C-terminal proline-rich region binds to a variety of SH3 domain-containing proteins including SH3GL1, SH3GL2, SH3GL3 and GRB2.

It is found in the cytoplasm. The protein resides in the cell membrane. Its subcellular location is the membrane raft. The protein localises to the presynapse. It localises to the cytoskeleton. It catalyses the reaction a 1,2-diacyl-sn-glycero-3-phospho-(1D-myo-inositol-4,5-bisphosphate) + H2O = a 1,2-diacyl-sn-glycero-3-phospho-(1D-myo-inositol 4-phosphate) + phosphate. In terms of biological role, inositol 5-phosphatase which may be involved in distinct membrane trafficking and signal transduction pathways. May mediate the inhibitory effect of Rac1 on endocytosis. This is Synaptojanin-2 (SYNJ2) from Homo sapiens (Human).